The primary structure comprises 313 residues: Phosphate import ATP-binding protein PstB 2 (313 aa).

Over residues 1-33 (MSDSINTEPSTDTQTNGERTVETTSPSAETTAG) the composition is skewed to polar residues. A disordered region spans residues 1 to 40 (MSDSINTEPSTDTQTNGERTVETTSPSAETTAGESEEQVR). The region spanning 54–308 (LSVENLDVWY…PESQRVEDYI (255 aa)) is the ABC transporter domain. 86-93 (GPSGCGKS) serves as a coordination point for ATP.

Belongs to the ABC transporter superfamily. Phosphate importer (TC 3.A.1.7) family. The complex is composed of two ATP-binding proteins (PstB), two transmembrane proteins (PstC and PstA) and a solute-binding protein (PstS).

It localises to the cell membrane. The enzyme catalyses phosphate(out) + ATP + H2O = ADP + 2 phosphate(in) + H(+). Its function is as follows. Part of the ABC transporter complex PstSACB involved in phosphate import. Responsible for energy coupling to the transport system. This is Phosphate import ATP-binding protein PstB 2 from Haloarcula marismortui (strain ATCC 43049 / DSM 3752 / JCM 8966 / VKM B-1809) (Halobacterium marismortui).